Here is a 133-residue protein sequence, read N- to C-terminus: MSWQTYVDEHLMCDIDGQGQQLAASAIVGHDGSVWAQSSSFPQFKPQEITGIMKDFEEPGHLAPTGLHLGGIKYMVIQGEAGAVIRGKKGSGGITIKKTGQALVFGIYEEPVTPGQCNMVVERLGDYLIDQGL.

A disulfide bridge links Cys-13 with Cys-117. An Involved in PIP2 interaction motif is present at residues 83–99 (AVIRGKKGSGGITIKKT). Phosphothreonine is present on Thr-113.

The protein belongs to the profilin family. In terms of assembly, occurs in many kinds of cells as a complex with monomeric actin in a 1:1 ratio. Phosphorylated by MAP kinases.

It is found in the cytoplasm. The protein resides in the cytoskeleton. Functionally, binds to actin and affects the structure of the cytoskeleton. At high concentrations, profilin prevents the polymerization of actin, whereas it enhances it at low concentrations. In Betula pendula (European white birch), this protein is Profilin-2.